The following is a 305-amino-acid chain: Outer membrane protein assembly factor BamD (305 aa).

Positions 1-24 (MLRIFQGRPAVTIAAVLVAASVAG) are cleaved as a signal peptide. Cysteine 25 is lipidated: N-palmitoyl cysteine. Cysteine 25 carries S-diacylglycerol cysteine lipidation. 4 TPR repeats span residues 41–74 (VELL…HPYS), 78–111 (RRSI…YPGN), 113–136 (SAQY…NRDQ), and 174–207 (AGKE…HQTT).

This sequence belongs to the BamD family. In terms of assembly, part of the Bam complex.

It localises to the cell outer membrane. In terms of biological role, part of the outer membrane protein assembly complex, which is involved in assembly and insertion of beta-barrel proteins into the outer membrane. The protein is Outer membrane protein assembly factor BamD of Caulobacter vibrioides (strain ATCC 19089 / CIP 103742 / CB 15) (Caulobacter crescentus).